The primary structure comprises 317 residues: Biotin synthase (317 aa).

In terms of domain architecture, Radical SAM core spans Asn42–Lys260. Positions 57, 61, and 64 each coordinate [4Fe-4S] cluster. [2Fe-2S] cluster contacts are provided by Cys101, Cys132, Cys192, and Arg264.

Belongs to the radical SAM superfamily. Biotin synthase family. Homodimer. [4Fe-4S] cluster is required as a cofactor. It depends on [2Fe-2S] cluster as a cofactor.

The catalysed reaction is (4R,5S)-dethiobiotin + (sulfur carrier)-SH + 2 reduced [2Fe-2S]-[ferredoxin] + 2 S-adenosyl-L-methionine = (sulfur carrier)-H + biotin + 2 5'-deoxyadenosine + 2 L-methionine + 2 oxidized [2Fe-2S]-[ferredoxin]. It participates in cofactor biosynthesis; biotin biosynthesis; biotin from 7,8-diaminononanoate: step 2/2. Catalyzes the conversion of dethiobiotin (DTB) to biotin by the insertion of a sulfur atom into dethiobiotin via a radical-based mechanism. The chain is Biotin synthase from Thiobacillus denitrificans (strain ATCC 25259 / T1).